We begin with the raw amino-acid sequence, 181 residues long: Peptidyl-tRNA hydrolase (181 aa).

Residue Y14 participates in tRNA binding. H19 functions as the Proton acceptor in the catalytic mechanism. TRNA is bound by residues Y62, N64, and N108.

It belongs to the PTH family. As to quaternary structure, monomer.

Its subcellular location is the cytoplasm. The catalysed reaction is an N-acyl-L-alpha-aminoacyl-tRNA + H2O = an N-acyl-L-amino acid + a tRNA + H(+). Functionally, hydrolyzes ribosome-free peptidyl-tRNAs (with 1 or more amino acids incorporated), which drop off the ribosome during protein synthesis, or as a result of ribosome stalling. In terms of biological role, catalyzes the release of premature peptidyl moieties from peptidyl-tRNA molecules trapped in stalled 50S ribosomal subunits, and thus maintains levels of free tRNAs and 50S ribosomes. The chain is Peptidyl-tRNA hydrolase from Campylobacter jejuni subsp. jejuni serotype O:23/36 (strain 81-176).